The following is an 822-amino-acid chain: DNA-directed RNA polymerase subunit beta N-terminal section (822 aa).

The tract at residues 376–408 (ELTEGNPSSKSQTKNKTSASKKSKTLNVANTKG) is disordered. Over residues 383–393 (SSKSQTKNKTS) the composition is skewed to low complexity.

Belongs to the RNA polymerase beta chain family. In terms of assembly, in plastids the minimal PEP RNA polymerase catalytic core is composed of four subunits: alpha, beta, beta', and beta''. When a (nuclear-encoded) sigma factor is associated with the core the holoenzyme is formed, which can initiate transcription.

It is found in the plastid. Its subcellular location is the chloroplast. It carries out the reaction RNA(n) + a ribonucleoside 5'-triphosphate = RNA(n+1) + diphosphate. In terms of biological role, DNA-dependent RNA polymerase catalyzes the transcription of DNA into RNA using the four ribonucleoside triphosphates as substrates. The chain is DNA-directed RNA polymerase subunit beta N-terminal section (rpoB1) from Chlamydomonas reinhardtii (Chlamydomonas smithii).